An 831-amino-acid polypeptide reads, in one-letter code: Translation initiation factor IF-2 (831 aa).

The 171-residue stretch at 329-499 folds into the tr-type G domain; that stretch reads TRAPVVTVMG…LLIAEMQDLK (171 aa). The tract at residues 338-345 is G1; that stretch reads GHVDHGKT. 338 to 345 serves as a coordination point for GTP; sequence GHVDHGKT. The tract at residues 363 to 367 is G2; sequence GITQH. The segment at 385 to 388 is G3; sequence DTPG. GTP is bound by residues 385–389 and 439–442; these read DTPGH and NKID. The G4 stretch occupies residues 439-442; that stretch reads NKID. The segment at 475–477 is G5; the sequence is SAL.

The protein belongs to the TRAFAC class translation factor GTPase superfamily. Classic translation factor GTPase family. IF-2 subfamily.

The protein localises to the cytoplasm. Its function is as follows. One of the essential components for the initiation of protein synthesis. Protects formylmethionyl-tRNA from spontaneous hydrolysis and promotes its binding to the 30S ribosomal subunits. Also involved in the hydrolysis of GTP during the formation of the 70S ribosomal complex. In Rickettsia rickettsii (strain Iowa), this protein is Translation initiation factor IF-2.